The following is a 129-amino-acid chain: Small ribosomal subunit protein uS8mz (129 aa).

This sequence belongs to the universal ribosomal protein uS8 family. As to quaternary structure, component of the mitochondrial ribosome small subunit.

Its subcellular location is the mitochondrion. This is Small ribosomal subunit protein uS8mz (RPS15AB) from Arabidopsis thaliana (Mouse-ear cress).